A 294-amino-acid chain; its full sequence is Diaminopimelate epimerase (294 aa).

Asparagine 15, glutamine 47, and asparagine 67 together coordinate substrate. The active-site Proton donor is cysteine 76. Substrate is bound by residues 77–78 (GN), asparagine 163, asparagine 197, and 215–216 (ER). Cysteine 224 serves as the catalytic Proton acceptor. 225–226 (GS) contacts substrate.

This sequence belongs to the diaminopimelate epimerase family. In terms of assembly, homodimer.

The protein localises to the cytoplasm. The enzyme catalyses (2S,6S)-2,6-diaminopimelate = meso-2,6-diaminopimelate. It participates in amino-acid biosynthesis; L-lysine biosynthesis via DAP pathway; DL-2,6-diaminopimelate from LL-2,6-diaminopimelate: step 1/1. Its function is as follows. Catalyzes the stereoinversion of LL-2,6-diaminopimelate (L,L-DAP) to meso-diaminopimelate (meso-DAP), a precursor of L-lysine and an essential component of the bacterial peptidoglycan. This chain is Diaminopimelate epimerase, found in Mesorhizobium japonicum (strain LMG 29417 / CECT 9101 / MAFF 303099) (Mesorhizobium loti (strain MAFF 303099)).